A 190-amino-acid chain; its full sequence is Frizzled-6 (190 aa).

Residues 1–20 enclose the FZ domain; that stretch reads FGFAWPEELECSRLVNCDET. Residues 1–89 lie on the Extracellular side of the membrane; that stretch reads FGFAWPEELE…NYELDVAKSF (89 aa). A helical transmembrane segment spans residues 90 to 110; sequence IGIVSIFCLCATLFTFLTFLI. Topologically, residues 111–121 are cytoplasmic; it reads DVKRFRYPERP. The helical transmembrane segment at 122–142 threads the bilayer; the sequence is IIYYSVCYSIVSLMYFIGFLL. The Extracellular portion of the chain corresponds to 143–169; sequence GNRTACNKADDKLEIGETVVLGSQNKA. Residue Asn-144 is glycosylated (N-linked (GlcNAc...) asparagine). The chain crosses the membrane as a helical span at residues 170-190; the sequence is CTVLFMVLYFFTMAGTIWWVI.

Belongs to the G-protein coupled receptor Fz/Smo family.

The protein localises to the membrane. The protein resides in the cell membrane. Its subcellular location is the cell surface. It is found in the apical cell membrane. It localises to the cytoplasmic vesicle membrane. In terms of biological role, receptor for Wnt proteins. Most of frizzled receptors are coupled to the beta-catenin canonical signaling pathway, which leads to the activation of disheveled proteins, inhibition of GSK-3 kinase, nuclear accumulation of beta-catenin and activation of Wnt target genes. A second signaling pathway involving PKC and calcium fluxes has been seen for some family members, but it is not yet clear if it represents a distinct pathway or if it can be integrated in the canonical pathway, as PKC seems to be required for Wnt-mediated inactivation of GSK-3 kinase. Both pathways seem to involve interactions with G-proteins. Activation by Wnt5A stimulates PKC activity via a G-protein-dependent mechanism. Involved in transduction and intercellular transmission of polarity information during tissue morphogenesis and/or in differentiated tissues. Together with FZD3, may be involved in the neural tube closure and plays a role in the regulation of the establishment of planar cell polarity (PCP), particularly in the orientation of asymmetric bundles of stereocilia on the apical faces of a subset of auditory and vestibular sensory cells located in the inner ear. This Gallus gallus (Chicken) protein is Frizzled-6 (FZD6).